A 315-amino-acid chain; its full sequence is Aspartate carbamoyltransferase catalytic subunit (315 aa).

Residues Arg64 and Thr65 each coordinate carbamoyl phosphate. L-aspartate is bound at residue Lys93. Carbamoyl phosphate is bound by residues Arg114, His142, and Gln145. Positions 175 and 237 each coordinate L-aspartate. 2 residues coordinate carbamoyl phosphate: Leu276 and Pro277.

It belongs to the aspartate/ornithine carbamoyltransferase superfamily. ATCase family. Heterooligomer of catalytic and regulatory chains.

The enzyme catalyses carbamoyl phosphate + L-aspartate = N-carbamoyl-L-aspartate + phosphate + H(+). It functions in the pathway pyrimidine metabolism; UMP biosynthesis via de novo pathway; (S)-dihydroorotate from bicarbonate: step 2/3. Catalyzes the condensation of carbamoyl phosphate and aspartate to form carbamoyl aspartate and inorganic phosphate, the committed step in the de novo pyrimidine nucleotide biosynthesis pathway. The chain is Aspartate carbamoyltransferase catalytic subunit from Thermofilum pendens (strain DSM 2475 / Hrk 5).